The following is a 490-amino-acid chain: Cytochrome P450 71A25 (490 aa).

A helical membrane pass occupies residues 1–21 (MMMMIILLWSIIFMTILFLKK). C431 lines the heme pocket.

It belongs to the cytochrome P450 family. Heme is required as a cofactor.

The protein resides in the membrane. The sequence is that of Cytochrome P450 71A25 (CYP71A25) from Arabidopsis thaliana (Mouse-ear cress).